An 813-amino-acid polypeptide reads, in one-letter code: Protein mac-1 (813 aa).

Coiled coils occupy residues Val58–Ile89 and Ser122–Asn152. Disordered stretches follow at residues Thr97–Ala131 and Asn152–Ser193. Positions Ser158–Thr172 are enriched in polar residues. Residues Pro175 to Ala191 show a composition bias toward low complexity. Residues Gly246 to Thr253 and Gly575 to Thr582 contribute to the ATP site.

Belongs to the AAA ATPase family. Found in a complex composed of ced-3, ced-4 and mac-1 or of ced-9, ced-4 and mac-1. Within the complex, interacts with ced-4.

Probably together with ced-9, plays a modest role in preventing ced-4 and caspase ced-3-mediated apoptosis. This chain is Protein mac-1, found in Caenorhabditis elegans.